A 387-amino-acid polypeptide reads, in one-letter code: Oxidase FUB9 (387 aa).

Positions 1–20 are disordered; it reads MSRTNLPIQPAKMSDATSSK. The FMN hydroxy acid dehydrogenase domain occupies 18–379; it reads SSKPQIFSIQ…TPAHLSLLNA (362 aa). Tyrosine 44 provides a ligand contact to a 2-oxocarboxylate. FMN-binding residues include serine 126, glutamine 150, and threonine 178. Arginine 187 provides a ligand contact to a 2-oxocarboxylate. Lysine 250 contributes to the FMN binding site. The active-site Proton acceptor is histidine 274. Arginine 277 provides a ligand contact to a 2-oxocarboxylate. Residues 305-309 and 328-329 contribute to the FMN site; these read DGGFR and GR.

This sequence belongs to the FMN-dependent alpha-hydroxy acid dehydrogenase family. FMN is required as a cofactor.

It functions in the pathway mycotoxin biosynthesis. Oxidase; part of the gene cluster that mediates the biosynthesis of fusaric acid, a mycotoxin with low to moderate toxicity to animals and humans, but with high phytotoxic properties. L-aspartate is suggested as fusaric acid amino acid precursor that is activated and further processed to O-acetyl-L-homoserine by cluster enzymes aspartate kinase FUB3 and homoserine O-acetyltransferase FUB5, as well as enzymes of the primary metabolism. The polyketide synthase (PKS) FUB1 generates the triketide trans-2-hexenal which is presumptively released by the hydrolase FUB4 and linked to the NRPS-bound amino acid precursor by NAD(P)-dependent dehydrogenase FUB6. FUB1, FUB4, and the non-canonical NRPS Fub8 may form an enzyme complex. Further processing of the NRPS-bound intermediate might be carried out by FUB6 and the sulfhydrylase FUB7, enabling a spontaneous electrocyclization to close the carbon backbone of fusaric acid. Dihydrofusaric acid is likely to be released via reduction by the thioester reductase (TR) domain of FUB8 whereupon the final oxidation to fusaric acid may (also) be performed by the FMN-dependent dehydrogenase FUB9. In Gibberella moniliformis (strain M3125 / FGSC 7600) (Maize ear and stalk rot fungus), this protein is Oxidase FUB9.